The primary structure comprises 122 residues: Large ribosomal subunit protein uL18 (122 aa).

It belongs to the universal ribosomal protein uL18 family. Part of the 50S ribosomal subunit; part of the 5S rRNA/L5/L18/L25 subcomplex. Contacts the 5S and 23S rRNAs.

Its function is as follows. This is one of the proteins that bind and probably mediate the attachment of the 5S RNA into the large ribosomal subunit, where it forms part of the central protuberance. The chain is Large ribosomal subunit protein uL18 from Prochlorococcus marinus (strain MIT 9301).